The sequence spans 283 residues: 5'-nucleotidase SurE (283 aa).

A divalent metal cation-binding residues include D14, D15, S47, and N105.

Belongs to the SurE nucleotidase family. A divalent metal cation serves as cofactor.

The protein resides in the cytoplasm. It carries out the reaction a ribonucleoside 5'-phosphate + H2O = a ribonucleoside + phosphate. Functionally, nucleotidase that shows phosphatase activity on nucleoside 5'-monophosphates. The sequence is that of 5'-nucleotidase SurE from Chlamydia trachomatis serovar A (strain ATCC VR-571B / DSM 19440 / HAR-13).